A 104-amino-acid polypeptide reads, in one-letter code: Pyrimidine/purine nucleoside phosphorylase (104 aa).

Belongs to the nucleoside phosphorylase PpnP family.

The enzyme catalyses a purine D-ribonucleoside + phosphate = a purine nucleobase + alpha-D-ribose 1-phosphate. It carries out the reaction adenosine + phosphate = alpha-D-ribose 1-phosphate + adenine. It catalyses the reaction cytidine + phosphate = cytosine + alpha-D-ribose 1-phosphate. The catalysed reaction is guanosine + phosphate = alpha-D-ribose 1-phosphate + guanine. The enzyme catalyses inosine + phosphate = alpha-D-ribose 1-phosphate + hypoxanthine. It carries out the reaction thymidine + phosphate = 2-deoxy-alpha-D-ribose 1-phosphate + thymine. It catalyses the reaction uridine + phosphate = alpha-D-ribose 1-phosphate + uracil. The catalysed reaction is xanthosine + phosphate = alpha-D-ribose 1-phosphate + xanthine. In terms of biological role, catalyzes the phosphorolysis of diverse nucleosides, yielding D-ribose 1-phosphate and the respective free bases. Can use uridine, adenosine, guanosine, cytidine, thymidine, inosine and xanthosine as substrates. Also catalyzes the reverse reactions. The protein is Pyrimidine/purine nucleoside phosphorylase of Trichlorobacter lovleyi (strain ATCC BAA-1151 / DSM 17278 / SZ) (Geobacter lovleyi).